The primary structure comprises 158 residues: Inorganic pyrophosphatase (158 aa).

Glutamate 8 is a binding site for Mg(2+). Substrate contacts are provided by lysine 16, arginine 30, and tyrosine 42. The Mg(2+) site is built by aspartate 52, aspartate 57, aspartate 84, and aspartate 89. Aspartate 89 serves as the catalytic Proton acceptor. Tyrosine 125 is a substrate binding site.

This sequence belongs to the PPase family. In terms of assembly, homohexamer. The cofactor is Mg(2+).

It is found in the cytoplasm. The enzyme catalyses diphosphate + H2O = 2 phosphate + H(+). Catalyzes the hydrolysis of inorganic pyrophosphate (PPi) forming two phosphate ions. The protein is Inorganic pyrophosphatase of Corynebacterium glutamicum (strain ATCC 13032 / DSM 20300 / JCM 1318 / BCRC 11384 / CCUG 27702 / LMG 3730 / NBRC 12168 / NCIMB 10025 / NRRL B-2784 / 534).